The primary structure comprises 731 residues: RNA-binding protein RMD9-like, mitochondrial (731 aa).

A compositionally biased stretch (polar residues) spans 1–10; the sequence is MIRLAQQTQV. Disordered regions lie at residues 1 to 29, 77 to 133, and 590 to 630; these read MIRL…NSLT, GGNI…GNSI, and QNDR…FNNP. Over residues 83–100 the composition is skewed to low complexity; sequence NNNNHLAQNNSNNSNNHH. Residues 101–122 are compositionally biased toward basic residues; sequence NNNRNHHHNNNRNHHQNNHNHS. Ser-132 carries the phosphoserine modification. Positions 598-617 are enriched in polar residues; that stretch reads SNMNSTQISRTATPSPSLTP.

This sequence belongs to the RMD9 family. As to quaternary structure, monomer. Phosphorylated. Phosphorylation promotes binding to RNA.

It is found in the mitochondrion inner membrane. In terms of biological role, may be involved in the processing or stability of mitochondrial mRNAs. This is RNA-binding protein RMD9-like, mitochondrial from Saccharomyces cerevisiae (strain ATCC 204508 / S288c) (Baker's yeast).